A 146-amino-acid chain; its full sequence is FAD synthase (146 aa).

ATP is bound by residues 9 to 10, 14 to 17, and aspartate 92; these read TF and HPGH.

Belongs to the archaeal FAD synthase family. Homodimer. A divalent metal cation is required as a cofactor.

It carries out the reaction FMN + ATP + H(+) = FAD + diphosphate. Its pathway is cofactor biosynthesis; FAD biosynthesis; FAD from FMN: step 1/1. Its function is as follows. Catalyzes the transfer of the AMP portion of ATP to flavin mononucleotide (FMN) to produce flavin adenine dinucleotide (FAD) coenzyme. This chain is FAD synthase, found in Halobacterium salinarum (strain ATCC 29341 / DSM 671 / R1).